Consider the following 174-residue polypeptide: Eukaryotic translation elongation factor 1 epsilon-1 (174 aa).

Residue A2 is modified to N-acetylalanine. The tract at residues 2-56 (AAAAELRLLEKSLGLKPGNKYSAQGERQIPVLQTNNGPSLMGLSTIATHLVKQAS) is N-terminal. Residues 50 to 173 (HLVKQASKEH…FIKNRLYANS (124 aa)) form the GST C-terminal domain. Residues 57-63 (KEHLLGS) are linker. The C-terminal stretch occupies residues 64–152 (TAEEKAMVQQ…SRWFCHIQHY (89 aa)). The residue at position 138 (K138) is an N6-acetyllysine. Residues 153 to 169 (PDIRQHLSSIVFIKNRL) adopt a coiled-coil conformation.

As to quaternary structure, part of a multisubunit complex that groups tRNA ligases for Arg (RARS1), Asp (DARS1), Gln (QARS1), Ile (IARS1), Leu (LARS1), Lys (KARS1), Met (MARS1) the bifunctional ligase for Glu and Pro (EPRS1) and the auxiliary subunits AIMP1/p43, AIMP2/p38 and EEF1E1/p18. Can interact simultaneously with MARS1 and EPRS1. Forms a linear complex that contains MARS1, EEF1E1, EPRS1 and AIMP2 that is at the core of the multisubunit complex. Interacts with ATM and ATR. The interaction with ATM, which takes place independently of TP53, is induced by DNA damage that may occur during genotoxic stress or cell growth. The interaction with ATR is enhanced by UV irradiation.

The protein resides in the cytoplasm. It localises to the nucleus. Its function is as follows. Positive modulator of ATM response to DNA damage. The chain is Eukaryotic translation elongation factor 1 epsilon-1 (Eef1e1) from Mus musculus (Mouse).